The sequence spans 660 residues: Bifunctional polymyxin resistance protein ArnA (660 aa).

A formyltransferase ArnAFT region spans residues 1 to 304 (MKAVVFAYHD…TLGLVAGARL (304 aa)). His-104 serves as the catalytic Proton donor; for formyltransferase activity. Residues Arg-114 and 136 to 140 (VKRAD) each bind (6R)-10-formyltetrahydrofolate. A dehydrogenase ArnADH region spans residues 314 to 660 (RRTRVLILGV…QSVEPGDAEE (347 aa)). NAD(+)-binding positions include Asp-347 and 368–369 (DI). UDP-alpha-D-glucuronate-binding positions include Ala-393, Tyr-398, and 432-433 (TS). Glu-434 (proton acceptor; for decarboxylase activity) is an active-site residue. UDP-alpha-D-glucuronate-binding positions include Arg-460, Asn-492, 526 to 535 (KLIDGGRQKR), and Tyr-613. Arg-619 functions as the Proton donor; for decarboxylase activity in the catalytic mechanism.

The protein in the N-terminal section; belongs to the Fmt family. UDP-L-Ara4N formyltransferase subfamily. This sequence in the C-terminal section; belongs to the NAD(P)-dependent epimerase/dehydratase family. UDP-glucuronic acid decarboxylase subfamily. Homohexamer, formed by a dimer of trimers.

The enzyme catalyses UDP-alpha-D-glucuronate + NAD(+) = UDP-beta-L-threo-pentopyranos-4-ulose + CO2 + NADH. The catalysed reaction is UDP-4-amino-4-deoxy-beta-L-arabinose + (6R)-10-formyltetrahydrofolate = UDP-4-deoxy-4-formamido-beta-L-arabinose + (6S)-5,6,7,8-tetrahydrofolate + H(+). It participates in nucleotide-sugar biosynthesis; UDP-4-deoxy-4-formamido-beta-L-arabinose biosynthesis; UDP-4-deoxy-4-formamido-beta-L-arabinose from UDP-alpha-D-glucuronate: step 1/3. The protein operates within nucleotide-sugar biosynthesis; UDP-4-deoxy-4-formamido-beta-L-arabinose biosynthesis; UDP-4-deoxy-4-formamido-beta-L-arabinose from UDP-alpha-D-glucuronate: step 3/3. Its pathway is bacterial outer membrane biogenesis; lipopolysaccharide biosynthesis. Bifunctional enzyme that catalyzes the oxidative decarboxylation of UDP-glucuronic acid (UDP-GlcUA) to UDP-4-keto-arabinose (UDP-Ara4O) and the addition of a formyl group to UDP-4-amino-4-deoxy-L-arabinose (UDP-L-Ara4N) to form UDP-L-4-formamido-arabinose (UDP-L-Ara4FN). The modified arabinose is attached to lipid A and is required for resistance to polymyxin and cationic antimicrobial peptides. This is Bifunctional polymyxin resistance protein ArnA from Erwinia tasmaniensis (strain DSM 17950 / CFBP 7177 / CIP 109463 / NCPPB 4357 / Et1/99).